A 346-amino-acid chain; its full sequence is Phosphoribosylformylglycinamidine cyclo-ligase (346 aa).

The protein belongs to the AIR synthase family.

It localises to the cytoplasm. The catalysed reaction is 2-formamido-N(1)-(5-O-phospho-beta-D-ribosyl)acetamidine + ATP = 5-amino-1-(5-phospho-beta-D-ribosyl)imidazole + ADP + phosphate + H(+). The protein operates within purine metabolism; IMP biosynthesis via de novo pathway; 5-amino-1-(5-phospho-D-ribosyl)imidazole from N(2)-formyl-N(1)-(5-phospho-D-ribosyl)glycinamide: step 2/2. The protein is Phosphoribosylformylglycinamidine cyclo-ligase of Bacillus cereus (strain ATCC 10987 / NRS 248).